Reading from the N-terminus, the 190-residue chain is Probable thymidylate kinase (190 aa).

Residue 9 to 16 (GIDGAGKT) coordinates ATP.

The protein belongs to the thymidylate kinase family.

The catalysed reaction is dTMP + ATP = dTDP + ADP. This is Probable thymidylate kinase (tmk1) from Sulfurisphaera tokodaii (strain DSM 16993 / JCM 10545 / NBRC 100140 / 7) (Sulfolobus tokodaii).